A 185-amino-acid polypeptide reads, in one-letter code: Alkyl hydroperoxide reductase AhpD (185 aa).

C132 acts as the Proton donor in catalysis. C132 and C135 form a disulfide bridge. Catalysis depends on C135, which acts as the Cysteine sulfenic acid (-SOH) intermediate.

The protein belongs to the AhpD family.

It carries out the reaction N(6)-[(R)-dihydrolipoyl]-L-lysyl-[lipoyl-carrier protein] + a hydroperoxide = N(6)-[(R)-lipoyl]-L-lysyl-[lipoyl-carrier protein] + an alcohol + H2O. Its function is as follows. Antioxidant protein with alkyl hydroperoxidase activity. Required for the reduction of the AhpC active site cysteine residues and for the regeneration of the AhpC enzyme activity. The chain is Alkyl hydroperoxide reductase AhpD from Anaeromyxobacter sp. (strain Fw109-5).